A 377-amino-acid chain; its full sequence is Malate dehydrogenase, cytoplasmic (377 aa).

The Pro/N-degron motif lies at proline 2–valine 5. Phosphothreonine is present on threonine 6. NAD(+)-binding positions include glycine 20 to glycine 26 and aspartate 57. Substrate-binding residues include arginine 106 and arginine 112. NAD(+) contacts are provided by residues asparagine 119 and isoleucine 144 to asparagine 146. Substrate contacts are provided by asparagine 146 and arginine 185. The Proton acceptor role is filled by histidine 215. An NAD(+)-binding site is contributed by methionine 266.

This sequence belongs to the LDH/MDH superfamily. MDH type 1 family. As to quaternary structure, homodimer. In terms of processing, targeted for proteasomal degradation when cells are shifted to glucose-containing growth medium.

The protein localises to the cytoplasm. It carries out the reaction (S)-malate + NAD(+) = oxaloacetate + NADH + H(+). The isoenzyme MDH2 may function primarily in the glyoxylate cycle. The sequence is that of Malate dehydrogenase, cytoplasmic (MDH2) from Saccharomyces cerevisiae (strain ATCC 204508 / S288c) (Baker's yeast).